Consider the following 307-residue polypeptide: Elongation factor Ts (307 aa).

An involved in Mg(2+) ion dislocation from EF-Tu region spans residues 80 to 83 (TDFV).

Belongs to the EF-Ts family.

It localises to the cytoplasm. Functionally, associates with the EF-Tu.GDP complex and induces the exchange of GDP to GTP. It remains bound to the aminoacyl-tRNA.EF-Tu.GTP complex up to the GTP hydrolysis stage on the ribosome. The chain is Elongation factor Ts from Variovorax paradoxus (strain S110).